A 133-amino-acid polypeptide reads, in one-letter code: p53 and DNA damage-regulated protein 1 (133 aa).

It belongs to the prefoldin subunit beta family. In terms of assembly, component of the PAQosome complex which is responsible for the biogenesis of several protein complexes and which consists of R2TP complex members RUVBL1, RUVBL2, RPAP3 and PIH1D1, URI complex members PFDN2, PFDN6, PDRG1, UXT and URI1 as well as ASDURF, POLR2E and DNAAF10/WDR92.

Its subcellular location is the cytoplasm. May play a role in chaperone-mediated protein folding. This chain is p53 and DNA damage-regulated protein 1 (PDRG1), found in Bos taurus (Bovine).